Reading from the N-terminus, the 447-residue chain is Glucose-6-phosphate isomerase (447 aa).

The Proton donor role is filled by glutamate 289. Residues histidine 310 and lysine 424 contribute to the active site.

It belongs to the GPI family.

It localises to the cytoplasm. It catalyses the reaction alpha-D-glucose 6-phosphate = beta-D-fructose 6-phosphate. The protein operates within carbohydrate biosynthesis; gluconeogenesis. Its pathway is carbohydrate degradation; glycolysis; D-glyceraldehyde 3-phosphate and glycerone phosphate from D-glucose: step 2/4. Catalyzes the reversible isomerization of glucose-6-phosphate to fructose-6-phosphate. The sequence is that of Glucose-6-phosphate isomerase from Parabacteroides distasonis (strain ATCC 8503 / DSM 20701 / CIP 104284 / JCM 5825 / NCTC 11152).